The following is an 835-amino-acid chain: Protein translocase subunit SecA (835 aa).

ATP is bound by residues glutamine 85, 103 to 107 (GEGKT), and aspartate 492. Cysteine 819, cysteine 821, cysteine 830, and cysteine 831 together coordinate Zn(2+).

Belongs to the SecA family. As to quaternary structure, monomer and homodimer. Part of the essential Sec protein translocation apparatus which comprises SecA, SecYEG and auxiliary proteins SecDF. Other proteins may also be involved. The cofactor is Zn(2+).

Its subcellular location is the cell membrane. It is found in the cytoplasm. It catalyses the reaction ATP + H2O + cellular proteinSide 1 = ADP + phosphate + cellular proteinSide 2.. Functionally, part of the Sec protein translocase complex. Interacts with the SecYEG preprotein conducting channel. Has a central role in coupling the hydrolysis of ATP to the transfer of proteins into and across the cell membrane, serving as an ATP-driven molecular motor driving the stepwise translocation of polypeptide chains across the membrane. This chain is Protein translocase subunit SecA, found in Clostridium botulinum (strain Loch Maree / Type A3).